The sequence spans 46 residues: Light-harvesting protein B800/850/890 alpha-1 chain (46 aa).

The Cytoplasmic segment spans residues 1 to 12 (MWRLWKLYDPRR). Residues 13–33 (VLIGIFSWLAVLALVIHFILL) traverse the membrane as a helical segment. His-29 contributes to the a bacteriochlorophyll binding site. Topologically, residues 34 to 46 (STDRFNWVGGAAN) are periplasmic.

Belongs to the antenna complex alpha subunit family. As to quaternary structure, the core complex is formed by different alpha and beta chains, binding bacteriochlorophyll molecules, and arranged most probably in tetrameric structures disposed around the reaction center. The non-pigmented gamma chains may constitute additional components.

The protein localises to the cell inner membrane. Its function is as follows. Antenna complexes are light-harvesting systems, which transfer the excitation energy to the reaction centers. This chain is Light-harvesting protein B800/850/890 alpha-1 chain, found in Halorhodospira halophila (strain DSM 244 / SL1) (Ectothiorhodospira halophila (strain DSM 244 / SL1)).